The primary structure comprises 65 residues: Large ribosomal subunit protein bL35 (65 aa).

This sequence belongs to the bacterial ribosomal protein bL35 family.

The protein is Large ribosomal subunit protein bL35 of Nostoc sp. (strain PCC 7120 / SAG 25.82 / UTEX 2576).